Reading from the N-terminus, the 1271-residue chain is DNA-directed RNA polymerase subunit beta (1271 aa).

This sequence belongs to the RNA polymerase beta chain family. In terms of assembly, the RNAP catalytic core consists of 2 alpha, 1 beta, 1 beta' and 1 omega subunit. When a sigma factor is associated with the core the holoenzyme is formed, which can initiate transcription.

The enzyme catalyses RNA(n) + a ribonucleoside 5'-triphosphate = RNA(n+1) + diphosphate. DNA-dependent RNA polymerase catalyzes the transcription of DNA into RNA using the four ribonucleoside triphosphates as substrates. This chain is DNA-directed RNA polymerase subunit beta, found in Acholeplasma laidlawii (strain PG-8A).